The sequence spans 222 residues: Octanoyltransferase (222 aa).

Positions 34-214 constitute a BPL/LPL catalytic domain; sequence GEAPSTVLLL…EFRKHEEALV (181 aa). Substrate is bound by residues 72 to 79, 144 to 146, and 157 to 159; these read RGGKLTWH, AIG, and GVA. C175 (acyl-thioester intermediate) is an active-site residue.

This sequence belongs to the LipB family.

The protein resides in the cytoplasm. It carries out the reaction octanoyl-[ACP] + L-lysyl-[protein] = N(6)-octanoyl-L-lysyl-[protein] + holo-[ACP] + H(+). Its pathway is protein modification; protein lipoylation via endogenous pathway; protein N(6)-(lipoyl)lysine from octanoyl-[acyl-carrier-protein]: step 1/2. Catalyzes the transfer of endogenously produced octanoic acid from octanoyl-acyl-carrier-protein onto the lipoyl domains of lipoate-dependent enzymes. Lipoyl-ACP can also act as a substrate although octanoyl-ACP is likely to be the physiological substrate. This Pseudarthrobacter chlorophenolicus (strain ATCC 700700 / DSM 12829 / CIP 107037 / JCM 12360 / KCTC 9906 / NCIMB 13794 / A6) (Arthrobacter chlorophenolicus) protein is Octanoyltransferase.